The following is a 515-amino-acid chain: Nectin-1 (515 aa).

An N-terminal signal peptide occupies residues 1–30 (MARMGLAGAAGRWWGLALGLTAFFLPGAHT). One can recognise an Ig-like V-type domain in the interval 31–141 (QVVQVNDSMY…GNRESQLNLT (111 aa)). Residues 31–355 (QVVQVNDSMY…GRRAGQVPTA (325 aa)) are Extracellular-facing. Residues Asn36, Asn72, Asn139, Asn202, Asn286, Asn297, Asn307, and Asn332 are each glycosylated (N-linked (GlcNAc...) asparagine). Cys51 and Cys124 are oxidised to a cystine. Ig-like C2-type domains lie at 145-243 (KPTN…TLNV) and 247-334 (PEVT…VNIT). Intrachain disulfides connect Cys172/Cys226 and Cys269/Cys316. The segment at 282 to 299 (WTTLNGSLPKGVEAQNRT) is interaction with FGFR. Residues 356–376 (IIGGVVGSILLVLFVVGGIVV) form a helical membrane-spanning segment. At 377–515 (ALCRRRHTFK…SFISKKEWYV (139 aa)) the chain is on the cytoplasmic side. The tract at residues 400 to 486 (YSKAGIPQHH…DGYGDRTLGY (87 aa)) is disordered. A phosphoserine mark is found at Ser422, Ser434, and Ser435. Phosphotyrosine is present on Tyr436. Residues 436-445 (YEEEEEEEGG) are compositionally biased toward acidic residues. Residues 446-464 (GGERKVGGPHPKYDEDAKR) are compositionally biased toward basic and acidic residues. Phosphoserine is present on Ser509.

Belongs to the nectin family. In terms of assembly, (Microbial infection) Interacts with herpes pseudorabies virus/PRV envelope glycoprotein D.

It localises to the cell membrane. Its subcellular location is the cell junction. The protein resides in the adherens junction. It is found in the presynaptic cell membrane. Its function is as follows. (Microbial infection) Acts as a receptor for herpes simplex virus 1/HHV-1, herpes simplex virus 2/HHV-2, and pseudorabies virus/PRV. This Sus scrofa (Pig) protein is Nectin-1.